We begin with the raw amino-acid sequence, 165 residues long: NAD(P)H-quinone oxidoreductase subunit I, chloroplastic (165 aa).

2 4Fe-4S ferredoxin-type domains span residues 55-84 (GRIH…VDWE) and 95-124 (KSYS…MTEE). [4Fe-4S] cluster-binding residues include Cys-64, Cys-67, Cys-70, Cys-74, Cys-104, Cys-107, Cys-110, and Cys-114.

The protein belongs to the complex I 23 kDa subunit family. In terms of assembly, NDH is composed of at least 16 different subunits, 5 of which are encoded in the nucleus. The cofactor is [4Fe-4S] cluster.

The protein resides in the plastid. Its subcellular location is the chloroplast thylakoid membrane. It carries out the reaction a plastoquinone + NADH + (n+1) H(+)(in) = a plastoquinol + NAD(+) + n H(+)(out). The catalysed reaction is a plastoquinone + NADPH + (n+1) H(+)(in) = a plastoquinol + NADP(+) + n H(+)(out). Functionally, NDH shuttles electrons from NAD(P)H:plastoquinone, via FMN and iron-sulfur (Fe-S) centers, to quinones in the photosynthetic chain and possibly in a chloroplast respiratory chain. The immediate electron acceptor for the enzyme in this species is believed to be plastoquinone. Couples the redox reaction to proton translocation, and thus conserves the redox energy in a proton gradient. This chain is NAD(P)H-quinone oxidoreductase subunit I, chloroplastic, found in Psilotum nudum (Whisk fern).